We begin with the raw amino-acid sequence, 77 residues long: Large ribosomal subunit protein bL28 (77 aa).

The protein belongs to the bacterial ribosomal protein bL28 family.

The sequence is that of Large ribosomal subunit protein bL28 from Acidovorax ebreus (strain TPSY) (Diaphorobacter sp. (strain TPSY)).